The sequence spans 346 residues: Growth hormone-inducible transmembrane protein (346 aa).

The N-terminal 45 residues, 1-45 (MLAARLVCLRTLPSRVFQPTFITKASPLVKNSITKNQWLLTPSRE), are a transit peptide targeting the mitochondrion. Residues 46–83 (YATKTRIRTHRGKTGQELKEAALEPSLEKVFKIDQMGK) are Mitochondrial matrix-facing. A helical transmembrane segment spans residues 84–104 (WFVAGGAAVGLGALCYYGLGM). The Mitochondrial intermembrane segment spans residues 105 to 126 (SNEIGAIEKAVIWPQYVKDRIH). A helical membrane pass occupies residues 127–147 (STYMYLAGSIGLTALSALALA). The Mitochondrial matrix portion of the chain corresponds to 148 to 160 (RSPALMNFMMTGS). Residues 161–181 (WMTIGATFAAMIGAGMLVQSI) traverse the membrane as a helical segment. The Mitochondrial intermembrane portion of the chain corresponds to 182–191 (SYEQSPGPKH). The helical transmembrane segment at 192-212 (LAWMLHSGVMGAVVAPLTILG) threads the bilayer. The Mitochondrial matrix segment spans residues 213 to 214 (GP). The chain crosses the membrane as a helical span at residues 215 to 235 (LLLRAAWYTAGIVGGLSTVAM). Over 236-245 (CAPSEKFLNM) the chain is Mitochondrial intermembrane. The chain crosses the membrane as a helical span at residues 246–266 (GAPLGVGLGLVFASSLGSMFL). Residues 267–272 (PPTSVA) lie on the Mitochondrial matrix side of the membrane. Residues 273-293 (GATLYSVAMYGGLVLFSMFLL) form a helical membrane-spanning segment. Residues 294–346 (YDTQKVVKRAEITPAYGAQKYDPINSMLTIYMDTLNIFMRVATMLATGSNRKK) are Mitochondrial intermembrane-facing.

It belongs to the BI1 family. As to quaternary structure, interacts with LETM1 and AFG3L2. In terms of processing, undergoes AFG3L2-mediated proteolytic degradation, upon hyperpolarization of mitochondria.

It localises to the mitochondrion inner membrane. Its function is as follows. Plays an important role in maintenance of mitochondrial morphology and in mediating either calcium or potassium/proton antiport. Mediates proton-dependent calcium efflux from mitochondrion. Also functions as an electroneutral mitochondrial proton/potassium exchanger. Required for the mitochondrial tubular network and cristae organization. Involved in apoptotic release of cytochrome c. Inhibits AFG3L2 proteolytic activity, stimulating respiration and stabilizing respiratory enzymes in actively respiring mitochondria. However, when mitochondria become hyperpolarized, GHITM loses its inhibitory activity toward AFG3L2 and the now active AFG3L2 turns first on GHITM and, if hyperpolarization persists, on other proteins of the mitochondria, leading to a broad remodeling of the proteome. The polypeptide is Growth hormone-inducible transmembrane protein (Ghitm) (Rattus norvegicus (Rat)).